A 343-amino-acid polypeptide reads, in one-letter code: Holliday junction branch migration complex subunit RuvB (343 aa).

A large ATPase domain (RuvB-L) region spans residues 1–181 (MDRIVEIEKV…FGMQFRLQFY (181 aa)). ATP is bound by residues Leu-20, Arg-21, Gly-62, Lys-65, Thr-66, Thr-67, 128-130 (EDF), Arg-171, Tyr-181, and Arg-218. Thr-66 contacts Mg(2+). The segment at 182 to 252 (TDNELARIIS…RAKSSLDSLG (71 aa)) is small ATPAse domain (RuvB-S). The head domain (RuvB-H) stretch occupies residues 255–343 (DLGFDEMDLK…EKQNKGLFNE (89 aa)). 2 residues coordinate DNA: Arg-308 and Arg-313.

This sequence belongs to the RuvB family. In terms of assembly, homohexamer. Forms an RuvA(8)-RuvB(12)-Holliday junction (HJ) complex. HJ DNA is sandwiched between 2 RuvA tetramers; dsDNA enters through RuvA and exits via RuvB. An RuvB hexamer assembles on each DNA strand where it exits the tetramer. Each RuvB hexamer is contacted by two RuvA subunits (via domain III) on 2 adjacent RuvB subunits; this complex drives branch migration. In the full resolvosome a probable DNA-RuvA(4)-RuvB(12)-RuvC(2) complex forms which resolves the HJ.

It is found in the cytoplasm. The catalysed reaction is ATP + H2O = ADP + phosphate + H(+). In terms of biological role, the RuvA-RuvB-RuvC complex processes Holliday junction (HJ) DNA during genetic recombination and DNA repair, while the RuvA-RuvB complex plays an important role in the rescue of blocked DNA replication forks via replication fork reversal (RFR). RuvA specifically binds to HJ cruciform DNA, conferring on it an open structure. The RuvB hexamer acts as an ATP-dependent pump, pulling dsDNA into and through the RuvAB complex. RuvB forms 2 homohexamers on either side of HJ DNA bound by 1 or 2 RuvA tetramers; 4 subunits per hexamer contact DNA at a time. Coordinated motions by a converter formed by DNA-disengaged RuvB subunits stimulates ATP hydrolysis and nucleotide exchange. Immobilization of the converter enables RuvB to convert the ATP-contained energy into a lever motion, pulling 2 nucleotides of DNA out of the RuvA tetramer per ATP hydrolyzed, thus driving DNA branch migration. The RuvB motors rotate together with the DNA substrate, which together with the progressing nucleotide cycle form the mechanistic basis for DNA recombination by continuous HJ branch migration. Branch migration allows RuvC to scan DNA until it finds its consensus sequence, where it cleaves and resolves cruciform DNA. The chain is Holliday junction branch migration complex subunit RuvB from Campylobacter fetus subsp. fetus (strain 82-40).